A 274-amino-acid polypeptide reads, in one-letter code: MRKVAIYGKGGIGKSTTTQNTVAGLAEMGMKVMVVGCDPKADSTRLLLGGLQQKTVLDTLREEGEEVELEDIIKEGYRQTRCTESGGPEPGVGCAGRGIITSVNLLEQLGAYDKEWGLDYVFYDVLGDVVCGGFAMPIRDGKAEEIYIVCSGEMMAMYAANNICKGILKYADAGGVRLGGLICNSRKVDNEQAMIEELARKIGTQMIHFVPRDNFVQRAEINRKTVIDYDPTHGQADEYRALARKIHENKMFVIPKPLEIEELESLLIDFGIAN.

8–15 contributes to the ATP binding site; the sequence is GKGGIGKS. Cys-94 contributes to the [4Fe-4S] cluster binding site. At Arg-97 the chain carries ADP-ribosylarginine; by dinitrogenase reductase ADP-ribosyltransferase. A [4Fe-4S] cluster-binding site is contributed by Cys-131.

This sequence belongs to the NifH/BchL/ChlL family. As to quaternary structure, homodimer. [4Fe-4S] cluster serves as cofactor. In terms of processing, the reversible ADP-ribosylation of Arg-97 inactivates the nitrogenase reductase and regulates nitrogenase activity.

It catalyses the reaction N2 + 8 reduced [2Fe-2S]-[ferredoxin] + 16 ATP + 16 H2O = H2 + 8 oxidized [2Fe-2S]-[ferredoxin] + 2 NH4(+) + 16 ADP + 16 phosphate + 6 H(+). Functionally, the key enzymatic reactions in nitrogen fixation are catalyzed by the nitrogenase complex, which has 2 components: the iron protein and the molybdenum-iron protein. The polypeptide is Nitrogenase iron protein (Chlorobium phaeobacteroides (strain DSM 266 / SMG 266 / 2430)).